The primary structure comprises 246 residues: Purine nucleoside phosphorylase Cgl2154/cg2365 (246 aa).

Positions 68, 107, and 124 each coordinate Zn(2+).

This sequence belongs to the purine nucleoside phosphorylase YfiH/LACC1 family. In terms of assembly, homodimer. Requires Cu(2+) as cofactor. Zn(2+) serves as cofactor.

It carries out the reaction adenosine + phosphate = alpha-D-ribose 1-phosphate + adenine. It catalyses the reaction S-methyl-5'-thioadenosine + phosphate = 5-(methylsulfanyl)-alpha-D-ribose 1-phosphate + adenine. The catalysed reaction is inosine + phosphate = alpha-D-ribose 1-phosphate + hypoxanthine. The enzyme catalyses adenosine + H2O + H(+) = inosine + NH4(+). Functionally, purine nucleoside enzyme that catalyzes the phosphorolysis of adenosine and inosine nucleosides, yielding D-ribose 1-phosphate and the respective free bases, adenine and hypoxanthine. Also catalyzes the phosphorolysis of S-methyl-5'-thioadenosine into adenine and S-methyl-5-thio-alpha-D-ribose 1-phosphate. Also has adenosine deaminase activity. The sequence is that of Purine nucleoside phosphorylase Cgl2154/cg2365 from Corynebacterium glutamicum (strain ATCC 13032 / DSM 20300 / JCM 1318 / BCRC 11384 / CCUG 27702 / LMG 3730 / NBRC 12168 / NCIMB 10025 / NRRL B-2784 / 534).